Consider the following 219-residue polypeptide: Leukocyte surface antigen CD53 (219 aa).

The Cytoplasmic segment spans residues 2-11; it reads GMSSLKLLKY. A helical transmembrane segment spans residues 12–32; the sequence is VLFFFNFLFWVCGCCILGFGI. Residues 33-54 are Extracellular-facing; sequence HLLVQNTYGILFRNLPFLTLGN. Residues 55–69 traverse the membrane as a helical segment; the sequence is VLVIVGSIIMVVAFL. Over 70–80 the chain is Cytoplasmic; that stretch reads GCMGSIKENKC. The helical transmembrane segment at 81–106 threads the bilayer; that stretch reads LLMSFFVLLLLILLAEVTLAILLFVY. Over 107–181 the chain is Extracellular; the sequence is EKKINTLVAE…KKGQAWFHSN (75 aa). Asn119, Asn129, and Asn148 each carry an N-linked (GlcNAc...) asparagine glycan. Residues 182–206 traverse the membrane as a helical segment; it reads FLYIGIVTICVCVIQVLGMSFALTL. The Cytoplasmic portion of the chain corresponds to 207–219; that stretch reads NCQIDKTSQALGL.

The protein belongs to the tetraspanin (TM4SF) family. As to quaternary structure, interacts with SCIMP. Interacts with CD45/PTPRC. Interacts with IL7R. Interacts with RBL2 and PPP2CA. In terms of tissue distribution, spleen and thymus, B-cells, monocytes, macrophages, neutrophils, single (CD4 or CD8) positive thymocytes, peripheral T-cells.

It is found in the cell membrane. The protein localises to the cell junction. Its subcellular location is the membrane. In terms of biological role, required for efficient formation of myofibers in regenerating muscle at the level of cell fusion. May be involved in growth regulation in hematopoietic cells. This Rattus norvegicus (Rat) protein is Leukocyte surface antigen CD53 (Cd53).